We begin with the raw amino-acid sequence, 214 residues long: Ribonuclease HII (214 aa).

One can recognise an RNase H type-2 domain in the interval glutamate 26 to arginine 214. The a divalent metal cation site is built by aspartate 32, glutamate 33, and aspartate 124.

It belongs to the RNase HII family. It depends on Mn(2+) as a cofactor. The cofactor is Mg(2+).

It is found in the cytoplasm. The catalysed reaction is Endonucleolytic cleavage to 5'-phosphomonoester.. Its function is as follows. Endonuclease that specifically degrades the RNA of RNA-DNA hybrids. The chain is Ribonuclease HII from Burkholderia thailandensis (strain ATCC 700388 / DSM 13276 / CCUG 48851 / CIP 106301 / E264).